The primary structure comprises 565 residues: Dihydroxy-acid dehydratase (565 aa).

A [2Fe-2S] cluster-binding site is contributed by Cys50. Asp82 contributes to the Mg(2+) binding site. A [2Fe-2S] cluster-binding site is contributed by Cys123. Mg(2+) is bound by residues Asp124 and Lys125. Lys125 carries the post-translational modification N6-carboxylysine. Residue Cys195 participates in [2Fe-2S] cluster binding. Mg(2+) is bound at residue Glu447. The Proton acceptor role is filled by Ser473.

It belongs to the IlvD/Edd family. Homodimer. The cofactor is [2Fe-2S] cluster. Mg(2+) serves as cofactor.

The catalysed reaction is (2R)-2,3-dihydroxy-3-methylbutanoate = 3-methyl-2-oxobutanoate + H2O. It catalyses the reaction (2R,3R)-2,3-dihydroxy-3-methylpentanoate = (S)-3-methyl-2-oxopentanoate + H2O. The protein operates within amino-acid biosynthesis; L-isoleucine biosynthesis; L-isoleucine from 2-oxobutanoate: step 3/4. Its pathway is amino-acid biosynthesis; L-valine biosynthesis; L-valine from pyruvate: step 3/4. In terms of biological role, functions in the biosynthesis of branched-chain amino acids. Catalyzes the dehydration of (2R,3R)-2,3-dihydroxy-3-methylpentanoate (2,3-dihydroxy-3-methylvalerate) into 2-oxo-3-methylpentanoate (2-oxo-3-methylvalerate) and of (2R)-2,3-dihydroxy-3-methylbutanoate (2,3-dihydroxyisovalerate) into 2-oxo-3-methylbutanoate (2-oxoisovalerate), the penultimate precursor to L-isoleucine and L-valine, respectively. The protein is Dihydroxy-acid dehydratase of Halorhodospira halophila (strain DSM 244 / SL1) (Ectothiorhodospira halophila (strain DSM 244 / SL1)).